The sequence spans 326 residues: tRNA-modifying protein YgfZ (326 aa).

2 residues coordinate folate: Trp-27 and Trp-189.

It belongs to the tRNA-modifying YgfZ family.

It localises to the cytoplasm. Folate-binding protein involved in regulating the level of ATP-DnaA and in the modification of some tRNAs. It is probably a key factor in regulatory networks that act via tRNA modification, such as initiation of chromosomal replication. The sequence is that of tRNA-modifying protein YgfZ from Enterobacter sp. (strain 638).